Here is a 300-residue protein sequence, read N- to C-terminus: Ribosomal RNA small subunit methyltransferase H (300 aa).

S-adenosyl-L-methionine is bound by residues Gly-46–His-48, Asp-65, Phe-92, Asp-107, and Gln-114.

This sequence belongs to the methyltransferase superfamily. RsmH family.

The protein resides in the cytoplasm. It catalyses the reaction cytidine(1402) in 16S rRNA + S-adenosyl-L-methionine = N(4)-methylcytidine(1402) in 16S rRNA + S-adenosyl-L-homocysteine + H(+). Specifically methylates the N4 position of cytidine in position 1402 (C1402) of 16S rRNA. The chain is Ribosomal RNA small subunit methyltransferase H from Prochlorococcus marinus (strain MIT 9215).